Consider the following 154-residue polypeptide: Transcription antitermination protein NusB (154 aa).

The protein belongs to the NusB family.

Functionally, involved in transcription antitermination. Required for transcription of ribosomal RNA (rRNA) genes. Binds specifically to the boxA antiterminator sequence of the ribosomal RNA (rrn) operons. The polypeptide is Transcription antitermination protein NusB (Desulfosudis oleivorans (strain DSM 6200 / JCM 39069 / Hxd3) (Desulfococcus oleovorans)).